The sequence spans 740 residues: MLKLFSAFRKNKIWDFNGGIHPPEMKTQSNGTPLRQVPLAQRFVIPLKQHIGAEGELCVSVGDKVLRGQPLTRGRGKMLPVHAPTSGTVTAIAPHSTAHPSALAELSVIIDADGEDCWIPRDGWADYRSRRREELIERIHQFGVAGLGGAGFPTGVKLQGGGDKIETLIINAAECEPYITADDRLMQDCAAQVVEGIRILAHILQPREILIGIEDNKPQAISMLRAVLADSHDISLRVIPTKYPSGGAKQLTYILTGKQVPHGGRSSDIGVLMQNVGTAYAVKRAVIDGEPITERVVTLTGEAIARPGNVWARLGTPVRHLLNDAGFCPSADQMVIMGGPLMGFTLPWLDVPVVKITNCLLAPSANELGEPQEEQSCIRCSACADACPADLLPQQLYWFSKGQQHDKATTHNIADCIECGACAWVCPSNIPLVQYFRQEKAEIAAIRQEEKRAAEAKARFEARQARLEREKAARLERHKSAAVQPAAKDKDAIAAALARVKEKQAQATQPIVIKAGERPDNSAIIAAREARKAQARAKQAELQQTNDAATVADPRKTAVEAAIARAKARKLEQQQANAEPEEQVDPRKAAVEAAIARAKARKLEQQQANAEPEEQVDPRKAAVEAAIARAKARKLEQQQSNAEPEEQVDPRKAAVEAAIARAKARKLEQQQANAEPEEQVDPRKAAVEAAIARAKARKLEQQQTNAEPEEQVDPRKAAVAAAIARAQAKKAAQQKVVNED.

2 consecutive 4Fe-4S ferredoxin-type domains span residues G369–Y397 and K407–F436. 8 residues coordinate [4Fe-4S] cluster: C377, C380, C383, C387, C416, C419, C422, and C426. The tract at residues K602–K716 is disordered.

It belongs to the 4Fe4S bacterial-type ferredoxin family. RnfC subfamily. In terms of assembly, the complex is composed of six subunits: RsxA, RsxB, RsxC, RsxD, RsxE and RsxG. Requires [4Fe-4S] cluster as cofactor.

It is found in the cell inner membrane. Part of a membrane-bound complex that couples electron transfer with translocation of ions across the membrane. Required to maintain the reduced state of SoxR. The protein is Ion-translocating oxidoreductase complex subunit C of Escherichia coli (strain SE11).